A 426-amino-acid chain; its full sequence is 4-hydroxy-3-methylbut-2-en-1-yl diphosphate synthase (flavodoxin) (426 aa).

The interval 1 to 20 is disordered; the sequence is MLDRDLTLSDDAYESSPVSR. The [4Fe-4S] cluster site is built by cysteine 320, cysteine 323, cysteine 366, and glutamate 373.

The protein belongs to the IspG family. It depends on [4Fe-4S] cluster as a cofactor.

The catalysed reaction is (2E)-4-hydroxy-3-methylbut-2-enyl diphosphate + oxidized [flavodoxin] + H2O + 2 H(+) = 2-C-methyl-D-erythritol 2,4-cyclic diphosphate + reduced [flavodoxin]. It participates in isoprenoid biosynthesis; isopentenyl diphosphate biosynthesis via DXP pathway; isopentenyl diphosphate from 1-deoxy-D-xylulose 5-phosphate: step 5/6. Converts 2C-methyl-D-erythritol 2,4-cyclodiphosphate (ME-2,4cPP) into 1-hydroxy-2-methyl-2-(E)-butenyl 4-diphosphate. This is 4-hydroxy-3-methylbut-2-en-1-yl diphosphate synthase (flavodoxin) from Wolbachia pipientis subsp. Culex pipiens (strain wPip).